Consider the following 451-residue polypeptide: Trigger factor (451 aa).

The region spanning 165 to 250 is the PPIase FKBP-type domain; that stretch reads DDKLTIDFEG…LHQIQVREAL (86 aa).

It belongs to the FKBP-type PPIase family. Tig subfamily.

It localises to the cytoplasm. It catalyses the reaction [protein]-peptidylproline (omega=180) = [protein]-peptidylproline (omega=0). In terms of biological role, involved in protein export. Acts as a chaperone by maintaining the newly synthesized protein in an open conformation. Functions as a peptidyl-prolyl cis-trans isomerase. In Helicobacter pylori (strain P12), this protein is Trigger factor.